The following is a 487-amino-acid chain: UDP-N-acetylmuramate--L-alanine ligase (487 aa).

An ATP-binding site is contributed by 122 to 128 (GTHGKTS).

The protein belongs to the MurCDEF family.

The protein localises to the cytoplasm. It catalyses the reaction UDP-N-acetyl-alpha-D-muramate + L-alanine + ATP = UDP-N-acetyl-alpha-D-muramoyl-L-alanine + ADP + phosphate + H(+). It functions in the pathway cell wall biogenesis; peptidoglycan biosynthesis. Its function is as follows. Cell wall formation. The sequence is that of UDP-N-acetylmuramate--L-alanine ligase from Corynebacterium urealyticum (strain ATCC 43042 / DSM 7109).